The following is a 363-amino-acid chain: 3-isopropylmalate dehydrogenase (363 aa).

78-91 (GKKWDTLPINERPE) serves as a coordination point for NAD(+). Arginine 99, arginine 109, arginine 138, and aspartate 227 together coordinate substrate. Residues aspartate 227, aspartate 251, and aspartate 255 each coordinate Mg(2+). An NAD(+)-binding site is contributed by 285–297 (GSAPDIQGKNIAN).

Belongs to the isocitrate and isopropylmalate dehydrogenases family. LeuB type 1 subfamily. As to quaternary structure, homodimer. It depends on Mg(2+) as a cofactor. Mn(2+) is required as a cofactor.

It is found in the cytoplasm. It catalyses the reaction (2R,3S)-3-isopropylmalate + NAD(+) = 4-methyl-2-oxopentanoate + CO2 + NADH. It functions in the pathway amino-acid biosynthesis; L-leucine biosynthesis; L-leucine from 3-methyl-2-oxobutanoate: step 3/4. In terms of biological role, catalyzes the oxidation of 3-carboxy-2-hydroxy-4-methylpentanoate (3-isopropylmalate) to 3-carboxy-4-methyl-2-oxopentanoate. The product decarboxylates to 4-methyl-2 oxopentanoate. This is 3-isopropylmalate dehydrogenase from Buchnera aphidicola subsp. Diuraphis noxia.